The following is a 345-amino-acid chain: 4-hydroxythreonine-4-phosphate dehydrogenase (345 aa).

Residues His148 and Thr149 each contribute to the substrate site. Positions 182, 227, and 282 each coordinate a divalent metal cation. Residues Lys290, Asn299, and Arg308 each coordinate substrate.

It belongs to the PdxA family. As to quaternary structure, homodimer. Zn(2+) is required as a cofactor. Mg(2+) serves as cofactor. It depends on Co(2+) as a cofactor.

It is found in the cytoplasm. It carries out the reaction 4-(phosphooxy)-L-threonine + NAD(+) = 3-amino-2-oxopropyl phosphate + CO2 + NADH. Its pathway is cofactor biosynthesis; pyridoxine 5'-phosphate biosynthesis; pyridoxine 5'-phosphate from D-erythrose 4-phosphate: step 4/5. Catalyzes the NAD(P)-dependent oxidation of 4-(phosphooxy)-L-threonine (HTP) into 2-amino-3-oxo-4-(phosphooxy)butyric acid which spontaneously decarboxylates to form 3-amino-2-oxopropyl phosphate (AHAP). This Bradyrhizobium diazoefficiens (strain JCM 10833 / BCRC 13528 / IAM 13628 / NBRC 14792 / USDA 110) protein is 4-hydroxythreonine-4-phosphate dehydrogenase.